A 93-amino-acid chain; its full sequence is UPF0358 protein BH2626 (93 aa).

Belongs to the UPF0358 family.

The chain is UPF0358 protein BH2626 from Halalkalibacterium halodurans (strain ATCC BAA-125 / DSM 18197 / FERM 7344 / JCM 9153 / C-125) (Bacillus halodurans).